We begin with the raw amino-acid sequence, 334 residues long: Deoxyhypusine synthase (334 aa).

NAD(+) contacts are provided by residues 73-77, 99-101, Glu105, and Asp207; these read SNIIS and TGG. 104–105 provides a ligand contact to spermidine; the sequence is EE. The spermidine site is built by Asp212 and His256. 276 to 277 provides a ligand contact to NAD(+); that stretch reads NA. Residues 282–284 and 291–297 contribute to the spermidine site; these read GSD and EAVSWGK. Catalysis depends on Lys297, which acts as the Nucleophile. 310–311 is a binding site for NAD(+); that stretch reads DA.

It belongs to the deoxyhypusine synthase family. NAD(+) is required as a cofactor.

The catalysed reaction is [eIF5A protein]-L-lysine + spermidine = [eIF5A protein]-deoxyhypusine + propane-1,3-diamine. Its pathway is protein modification; eIF5A hypusination. Its function is as follows. Catalyzes the NAD-dependent oxidative cleavage of spermidine and the subsequent transfer of the butylamine moiety of spermidine to the epsilon-amino group of a specific lysine residue of the eIF-5A precursor protein to form the intermediate deoxyhypusine residue. The sequence is that of Deoxyhypusine synthase (DYS1) from Encephalitozoon cuniculi (strain GB-M1) (Microsporidian parasite).